Consider the following 409-residue polypeptide: Elongation factor Tu (409 aa).

A tr-type G domain is found at 10-214 (KPHVNIGTIG…EVDGYIPQPE (205 aa)). The G1 stretch occupies residues 19-26 (GHVDHGKT). 19-26 (GHVDHGKT) serves as a coordination point for GTP. Residue Thr26 participates in Mg(2+) binding. The interval 60–64 (GITIN) is G2. The G3 stretch occupies residues 81–84 (DCPG). Residues 81–85 (DCPGH) and 136–139 (NKQD) each bind GTP. The interval 136–139 (NKQD) is G4. The tract at residues 174-176 (SAL) is G5.

It belongs to the TRAFAC class translation factor GTPase superfamily. Classic translation factor GTPase family. EF-Tu/EF-1A subfamily. In terms of assembly, monomer.

It is found in the cytoplasm. It catalyses the reaction GTP + H2O = GDP + phosphate + H(+). Functionally, GTP hydrolase that promotes the GTP-dependent binding of aminoacyl-tRNA to the A-site of ribosomes during protein biosynthesis. The protein is Elongation factor Tu of Trichodesmium erythraeum (strain IMS101).